A 351-amino-acid chain; its full sequence is Alcohol dehydrogenase 2 (351 aa).

The Zn(2+) site is built by cysteine 47, histidine 70, cysteine 101, cysteine 104, cysteine 107, cysteine 115, and cysteine 157. NAD(+) contacts are provided by residues 181–187 (GAGGGLG), aspartate 205, lysine 210, 272–274 (VGL), and arginine 344.

The protein belongs to the zinc-containing alcohol dehydrogenase family. In terms of assembly, homotetramer. Zn(2+) serves as cofactor.

It catalyses the reaction a secondary alcohol + NAD(+) = a ketone + NADH + H(+). Versatile oxidoreductase that catalyzes the oxidation and reduction of a broad range of substrates. Preferentially oxidizes secondary alcohols. Has highest activity for racemic 2-octanol. Is also an efficient reductase for selected substrates. Substrate selectivity was found for medium chain lipophilic ketones. Has highest activities for 2-octanone, 2-nonanone and 2-decanone. The enzyme is (S)-selective in the reduction direction and produces exclusively the (S)-enantiomer. The chain is Alcohol dehydrogenase 2 (ADH2) from Yarrowia lipolytica (strain CLIB 122 / E 150) (Yeast).